A 176-amino-acid chain; its full sequence is Non-specific lipid transfer protein GPI-anchored 12 (176 aa).

Positions 1-20 (MLTTNTLAVLLLLFLSLCSG) are cleaved as a signal peptide. Cystine bridges form between Cys40–Cys83, Cys50–Cys67, Cys68–Cys110, and Cys81–Cys120. Asn46 carries an N-linked (GlcNAc...) asparagine glycan. Residue Asn149 is the site of GPI-anchor amidated asparagine attachment. Residues 150-176 (GAMTTKYCGVALNSLALLLLFTFLSLS) constitute a propeptide, removed in mature form.

Belongs to the plant LTP family. Preferentially expressed in the endodermis of hypocotyls and roots of seedlings, and in petals and anthers of inflorescences. May also be expressed in siliques, carpels and pedicels.

The protein localises to the cell membrane. Its function is as follows. Probable lipid transfer protein. This is Non-specific lipid transfer protein GPI-anchored 12 from Arabidopsis thaliana (Mouse-ear cress).